The following is a 497-amino-acid chain: Amino acid oxidase fsqB (497 aa).

FAD contacts are provided by Val-14, Phe-15, Asp-38, Asn-53, Ala-57, Asn-58, Arg-63, Val-64, and Val-211. S-8alpha-FAD cysteine is present on Cys-414. 2 residues coordinate FAD: Phe-447 and Lys-448.

This sequence belongs to the MSOX/MTOX family. In terms of assembly, dimer. It depends on FAD as a cofactor.

It carries out the reaction (2S,4S,5S)-2-amino-6-(3,4-dihydroxyphenyl)-4-hydroxy-5-(methylamino)hexanoyl-[peptidyl-carrier protein] + O2 = (2S,4S)-2-amino-4-[(3S)-7,8-dihydroxy-1,2,3,4-tetrahydroisoquinolin-3-yl]-4-hydroxybutanoyl-[peptidyl-carrier protein] + H2O2. The catalysed reaction is N-methyl-L-dopa + O2 = (3S)-7,8-dihydroxy-1,2,3,4-tetrahydroisoquinoline-3-carboxylate + H2O2. It catalyses the reaction N-methyl-D-dopa + O2 = (3R)-7,8-dihydroxy-1,2,3,4-tetrahydroisoquinoline-3-carboxylate + H2O2. The protein operates within secondary metabolite biosynthesis. In terms of biological role, amino acid oxidase; part of the gene cluster that mediates the biosynthesis of the isoquinoline alkaloids fumisoquin A, fumisoquin B and fumisoquin C; as well as small amounts of fumipyrrole as a shunt metabolite. The products of the cluster lead to a brown coloration and are important for growth and conidiation. The nonribosomal peptide synthetase-like protein fsqF, which lacks a canonical condensation domain, is required for addition of a serine-derived dehydroalanine moiety to activated tyrosine but is not essential for the subsequent steps leading to isoquinoline formation. A different enzyme, most likely the ATP-grasp enzyme fsqD, is responsible for activation of tyrosine. Three additional enzymes encoded by the fsq cluster, the N-methyltransferase fsqC, the phenol 2-monooxygenase fsqG and the FAD-dependent oxidase fsqB, catalyze the formation of the isoquinoline ring system in the fumisoquins. FsqB converts the fspF thiolation domain-bound (2S,4S,5S)-2-amino-6-(3,4-dihydroxyphenyl)-4-hydroxy-5-(methylamino)hexanoyl into isoquinoline. The cyclization most likely proceeds via a two-step mechanism, beginning with FAD-dependent oxidation of the methyl group to an iminium species followed by electrophilic attack on the deprotonated phenol. Its function is as follows. Is able to convert N-methyl-3,4-dihydroxy-DL-phenylalanine (N-methyl-DOPA) directly into cyclic isoquinoline, in vitro. The absence of the meta-hydroxyl group, as in L-N-methyl-tyrosine, leads to a 25-fold lower rate of reduction and the formation of the demethylated product L-tyrosine, instead of a cyclic product. Does not accept the D-stereoisomer of N-methyltyrosine, in contrast to N-methyl-DOPA, for which both stereoisomers are oxidized with similar rates. In Aspergillus fumigatus (strain ATCC MYA-4609 / CBS 101355 / FGSC A1100 / Af293) (Neosartorya fumigata), this protein is Amino acid oxidase fsqB.